A 137-amino-acid chain; its full sequence is Nucleoside diphosphate kinase (137 aa).

Residues Lys9, Phe57, Arg85, Thr91, Arg102, and Asn112 each contribute to the ATP site. His115 functions as the Pros-phosphohistidine intermediate in the catalytic mechanism.

This sequence belongs to the NDK family. In terms of assembly, homotetramer. It depends on Mg(2+) as a cofactor.

It localises to the cytoplasm. It carries out the reaction a 2'-deoxyribonucleoside 5'-diphosphate + ATP = a 2'-deoxyribonucleoside 5'-triphosphate + ADP. The catalysed reaction is a ribonucleoside 5'-diphosphate + ATP = a ribonucleoside 5'-triphosphate + ADP. In terms of biological role, major role in the synthesis of nucleoside triphosphates other than ATP. The ATP gamma phosphate is transferred to the NDP beta phosphate via a ping-pong mechanism, using a phosphorylated active-site intermediate. The protein is Nucleoside diphosphate kinase of Campylobacter jejuni subsp. doylei (strain ATCC BAA-1458 / RM4099 / 269.97).